Consider the following 671-residue polypeptide: Phosphoenolpyruvate carboxykinase (ATP) 1 (671 aa).

Low complexity predominate over residues 1 to 10 (MSAGNGNATN). A disordered region spans residues 1–44 (MSAGNGNATNGDGGFSFPKGPVMPKITTGAAKRGSGVCHDDSGP). At Ser-2 the chain carries N-acetylserine. Ser-62 bears the Phosphoserine mark. Thr-66 bears the Phosphothreonine mark. The segment at 100-127 (TRESGPKVVRGDPAEKKTDGSTTPAYAH) is disordered. The span at 108 to 118 (VRGDPAEKKTD) shows a compositional bias: basic and acidic residues. Substrate is bound at residue Arg-189. Residues His-270 and Asn-271 each contribute to the Ca(2+) site. Substrate is bound by residues Tyr-328 and Lys-334. Residues Lys-334, His-353, and 369–377 (GLSGTGKTT) contribute to the ATP site. Residues Lys-334 and His-353 each contribute to the Mn(2+) site. Asp-390 provides a ligand contact to Mn(2+). Gly-404 provides a ligand contact to Ca(2+). Residues Glu-418, Arg-455, 574–575 (RI), Ile-575, and Thr-580 contribute to the ATP site. Position 455 (Arg-455) interacts with substrate.

This sequence belongs to the phosphoenolpyruvate carboxykinase (ATP) family. Monomer. It depends on Mn(2+) as a cofactor. Expressed in cotyledons, flowers, siliques, seeds, leaves, stems and roots. Localized in mid-veins.

It is found in the cytoplasm. It catalyses the reaction oxaloacetate + ATP = phosphoenolpyruvate + ADP + CO2. It functions in the pathway carbohydrate biosynthesis; gluconeogenesis. With respect to regulation, allosterically activated by calcium. It may represent the only case of a monomeric, allosteric enzyme. Its function is as follows. Involved in the gluconeogenesis. Catalyzes the conversion of oxaloacetate (OAA) to phosphoenolpyruvate (PEP) through direct phosphoryl transfer between the nucleoside triphosphate and OAA. This chain is Phosphoenolpyruvate carboxykinase (ATP) 1, found in Arabidopsis thaliana (Mouse-ear cress).